The sequence spans 273 residues: SPbeta prophage-derived uncharacterized protein YomF (273 aa).

The stretch at 119-149 (VIETLQGLIDEAEDTIIRMNERIAECERVTK) forms a coiled coil.

The chain is SPbeta prophage-derived uncharacterized protein YomF (yomF) from Bacillus subtilis (strain 168).